A 315-amino-acid chain; its full sequence is NADH-cytochrome b5 reductase-like (315 aa).

Positions 19 to 55 (RPTEPLPSQCCGSGCSPCVFDLYHRDLARWEAAQASK) constitute an Oxidoreductase-like domain. Positions 75-177 (ETFVAFCIIA…RGPFGDFFYK (103 aa)) constitute an FAD-binding FR-type domain. FAD-binding positions include 157 to 172 (ESWR…GPFG) and 182 to 214 (GELL…TFVT).

The protein belongs to the flavoprotein pyridine nucleotide cytochrome reductase family. The cofactor is FAD.

It carries out the reaction 2 Fe(III)-[cytochrome b5] + NADH = 2 Fe(II)-[cytochrome b5] + NAD(+) + H(+). NADH-cytochrome b5 reductases are involved in desaturation and elongation of fatty acids, cholesterol biosynthesis, drug metabolism, and, in erythrocyte, methemoglobin reduction. This chain is NADH-cytochrome b5 reductase-like (CYB5RL), found in Homo sapiens (Human).